The primary structure comprises 365 residues: Popy Class I histocompatibility antigen, A-1 alpha chain (365 aa).

A signal peptide spans 1-24; the sequence is MAIMAPRTLLLLLSGALALTQTWA. The tract at residues 25 to 114 is alpha-1; the sequence is GSHSMRYFST…LRGYYNQSDG (90 aa). Residues 25–308 are Extracellular-facing; it reads GSHSMRYFST…ELSSQPTIPI (284 aa). An N-linked (GlcNAc...) asparagine glycan is attached at asparagine 110. The segment at 115-206 is alpha-2; sequence GSHTIQRMFG…ENGKETLQRT (92 aa). 2 cysteine pairs are disulfide-bonded: cysteine 125-cysteine 188 and cysteine 227-cysteine 283. The alpha-3 stretch occupies residues 207 to 298; the sequence is DAPKTHMTHH…GLPEPLTLRW (92 aa). The region spanning 209-297 is the Ig-like C1-type domain; that stretch reads PKTHMTHHPV…EGLPEPLTLR (89 aa). The tract at residues 299-308 is connecting peptide; sequence ELSSQPTIPI. Residues 309–332 form a helical membrane-spanning segment; the sequence is VGIIAGLVLLGAVITGAVVAAVMW. Over 333–365 the chain is Cytoplasmic; sequence RRRNSDRKGGSYSQAASNDSAQGSDVSLTACKV. Residues 340–365 are disordered; that stretch reads KGGSYSQAASNDSAQGSDVSLTACKV. Serine 343 bears the Phosphoserine mark. Over residues 343–359 the composition is skewed to polar residues; sequence SYSQAASNDSAQGSDVS. Tyrosine 344 carries the post-translational modification Phosphotyrosine. Serine 345, serine 349, serine 352, serine 356, and serine 359 each carry phosphoserine.

It belongs to the MHC class I family. Heterodimer of an alpha chain and a beta chain (beta-2-microglobulin).

The protein resides in the membrane. Functionally, involved in the presentation of foreign antigens to the immune system. The polypeptide is Popy Class I histocompatibility antigen, A-1 alpha chain (Pongo pygmaeus (Bornean orangutan)).